Here is a 95-residue protein sequence, read N- to C-terminus: Co-chaperonin GroES (95 aa).

The protein belongs to the GroES chaperonin family. Heptamer of 7 subunits arranged in a ring. Interacts with the chaperonin GroEL.

It localises to the cytoplasm. In terms of biological role, together with the chaperonin GroEL, plays an essential role in assisting protein folding. The GroEL-GroES system forms a nano-cage that allows encapsulation of the non-native substrate proteins and provides a physical environment optimized to promote and accelerate protein folding. GroES binds to the apical surface of the GroEL ring, thereby capping the opening of the GroEL channel. The sequence is that of Co-chaperonin GroES from Desulfosudis oleivorans (strain DSM 6200 / JCM 39069 / Hxd3) (Desulfococcus oleovorans).